A 419-amino-acid polypeptide reads, in one-letter code: MATEYWSRHLRSVLAPLFAAAGTYSPEDQESHLAFIDEHIAPNLGPLPWEPHGPYSTPSSLVGSPFDPSINIVSSGKAKVRFDFDVISPPDRTGPDPFAEGSAREILHRLADLVGADTQWMGYLMDALYLTPAEAEVAKTKLPPGVAIPPSSVGFDFDGPERTLKFYIPSVRKALATGQDVSELMLKTLRGLQPLGSELVPAMDLIASYLSTRTNDAMLPLVGIDCLDPRTHKNARVKCYLHTSSNSFAVVRDVLTLGGRLSDDTSLKRVETLKSVWPLLINELEGPQSDAATMDESWSKPERLNRTGYSGIQYTIEITPGQAIPDTKIYVPLFQYTDSSEVAERNFESALKKLGNEWGLSGKYRSVMQEIFKDVENYGQTYASFSYTEGKGVYTTSYVAMPIKDEGGGSLAGDFGFRN.

Position 58–59 (58–59) interacts with L-tryptophan; it reads PS. Substrate contacts are provided by arginine 81, lysine 165, tyrosine 167, arginine 236, lysine 238, tyrosine 240, tyrosine 330, and tyrosine 394.

The protein belongs to the tryptophan dimethylallyltransferase family.

It carries out the reaction didemethylasterriquinone D + dimethylallyl diphosphate = asterriquinone C1 + diphosphate. It functions in the pathway secondary metabolite biosynthesis. Its function is as follows. Indole prenyltransferase; part of the gene cluster that mediates the biosynthesis of terrequinone A, an antitumor agent. The first step in the biosynthetic pathway for terrequinone A is formation of indole pyruvic acid (IPA) from L-tryptophan by the aminotransferase tdiD. The nonribosomal peptide synthase tdiA then immediately converts unstable IPA to didemethylasterriquinone D (DDAQ D), via condensation of 2 IPA molecules. The symmetric connectivity of the 2 IPA molecules is thought to arise by head-to-tail dual Claisen condensations facilitated by the TE domain. TdiB then catalyzes reverse prenylation by transferring dimethylallyl diphosphate to carbon atom 2' of DDAQ D, to yield asterriquinone C-1. Finally, tdiC and tdiE enzymes robustly convert asterriquinone C-1 to terrequinone A via a transformation involving regular prenylation at carbon atom 5, which requires elimination of the hydroxy group on C-5. The sequence is that of Indole prenyltransferase tdiB from Emericella nidulans (strain FGSC A4 / ATCC 38163 / CBS 112.46 / NRRL 194 / M139) (Aspergillus nidulans).